A 2241-amino-acid polypeptide reads, in one-letter code: Large tegument protein deneddylase (2241 aa).

Positions 1–238 (MKVTQASCHQ…IDLTGVVRES (238 aa)) are deubiquitination activity. The region spanning 4–226 (TQASCHQGDI…AARLVSTYRD (223 aa)) is the Peptidase C76 domain. Catalysis depends on residues C24, D160, and H162. Residues 239–314 (ADTAATTTTA…STTSKTLATA (76 aa)) are disordered. The span at 240–250 (DTAATTTTAAP) shows a compositional bias: low complexity. Pro residues predominate over residues 251–268 (SLPPLPDPIVDPGCPPGV). Over residues 304 to 314 (PSTTSKTLATA) the composition is skewed to low complexity. Residues 327 to 331 (SSAVP) are interaction with inner tegument protein. Disordered stretches follow at residues 1187 to 1230 (MTET…PPAD) and 2118 to 2152 (PIAR…DTSR). Basic and acidic residues-rich tracts occupy residues 1190-1199 (TSERLDRSLR) and 2142-2152 (QIDHAQDDTSR).

It belongs to the herpesviridae large tegument protein family. Interacts with host CUL1 and CUL4A; these interactions inhibit the E3 ligase activity of cullins. Interacts with inner tegument protein. Interacts with capsid vertex specific component CVC2. Interacts with the major capsid protein/MCP.

Its subcellular location is the virion tegument. It localises to the host cytoplasm. It is found in the host nucleus. The catalysed reaction is Thiol-dependent hydrolysis of ester, thioester, amide, peptide and isopeptide bonds formed by the C-terminal Gly of ubiquitin (a 76-residue protein attached to proteins as an intracellular targeting signal).. Its function is as follows. Large tegument protein that plays multiple roles in the viral cycle. During viral entry, remains associated with the capsid while most of the tegument is detached and participates in the capsid transport toward the host nucleus. Plays a role in the routing of the capsid at the nuclear pore complex and subsequent uncoating. Within the host nucleus, acts as a deneddylase and promotes the degradation of nuclear CRLs (cullin-RING ubiquitin ligases) and thereby stabilizes nuclear CRL substrates, while cytoplasmic CRLs remain unaffected. These modifications prevent host cell cycle S-phase progression and create a favorable environment allowing efficient viral genome replication. Participates later in the secondary envelopment of capsids. Indeed, plays a linker role for the association of the outer viral tegument to the capsids together with the inner tegument protein. The chain is Large tegument protein deneddylase (UL48) from Homo sapiens (Human).